Consider the following 206-residue polypeptide: MLPPAIHLSLIPLLCILMKNCLAFKNDATEILYSHVVKPVSAHPSSNSTLNQARNGGRHFSSTGLDRNSRVQVGCRELRSTKYISDGQCTSISPLKELVCAGECLPLPVLPNWIGGGYGTKYWSRRSSQEWRCVNDKTRTQRIQLQCQDGSTRTYKITVVTACKCKRYTRQHNESSHNFESVSPAKPAQHHRERKRASKSSKHSLS.

The first 23 residues, Met1 to Ala23, serve as a signal peptide directing secretion. Residues Ala42 to Ser62 form a disordered region. Residues His43–Ser62 show a composition bias toward polar residues. N-linked (GlcNAc...) asparagine glycosylation occurs at Asn47. Cystine bridges form between Cys75/Cys133, Cys89/Cys147, Cys100/Cys163, and Cys104/Cys165. The region spanning Cys75–Arg170 is the CTCK domain. Asn173 carries N-linked (GlcNAc...) asparagine glycosylation. The segment at Ser176–Ser206 is disordered. Residues Ala188–Ser206 show a composition bias toward basic residues.

Belongs to the sclerostin family. Interacts with BMP2, BMP4, BMP6 and BMP7 with high affinity. Highly expressed within the maximally sensitized/receptive endometrium. Weakly expressed in brain, kidney and the female reproductive tract. Expressed in the dermal papilla (DP) and at high level in the precortex of both anagen vibrissae and pelage follicles. Dynymic expression during the hair cycle.

The protein resides in the secreted. Directly antagonizes activity of BMP2, BMP4, BMP6 and BMP7 in a dose-dependent manner. May be involved in the onset of endometrial receptivity for implantation/sensitization for the decidual cell reaction. Enhances Wnt signaling and inhibits TGF-beta signaling. In Rattus norvegicus (Rat), this protein is Sclerostin domain-containing protein 1 (Sostdc1).